Consider the following 217-residue polypeptide: Superoxide dismutase [Cu-Zn], chloroplastic (217 aa).

A chloroplast-targeting transit peptide spans 1–63 (MAAHSIFTTT…TTPKPLTVFA (63 aa)). The Cu cation site is built by H109, H111, and H126. Cysteines 120 and 209 form a disulfide. Positions 126, 134, 143, and 146 each coordinate Zn(2+). Residue H183 coordinates Cu cation.

Belongs to the Cu-Zn superoxide dismutase family. In terms of assembly, homotetramer. Cu cation serves as cofactor. Requires Zn(2+) as cofactor.

Its subcellular location is the plastid. It localises to the chloroplast. The catalysed reaction is 2 superoxide + 2 H(+) = H2O2 + O2. In terms of biological role, destroys radicals which are normally produced within the cells and which are toxic to biological systems. This Solanum lycopersicum (Tomato) protein is Superoxide dismutase [Cu-Zn], chloroplastic (SODCP.2).